Here is a 275-residue protein sequence, read N- to C-terminus: Sulfur carrier protein FdhD (275 aa).

C121 functions as the Cysteine persulfide intermediate in the catalytic mechanism. 258 to 263 (FSKPGR) is a Mo-bis(molybdopterin guanine dinucleotide) binding site.

This sequence belongs to the FdhD family.

It is found in the cytoplasm. In terms of biological role, required for formate dehydrogenase (FDH) activity. Acts as a sulfur carrier protein that transfers sulfur from IscS to the molybdenum cofactor prior to its insertion into FDH. The polypeptide is Sulfur carrier protein FdhD (Yersinia enterocolitica serotype O:8 / biotype 1B (strain NCTC 13174 / 8081)).